We begin with the raw amino-acid sequence, 291 residues long: Protease HtpX homolog (291 aa).

The next 2 membrane-spanning stretches (helical) occupy residues 4–24 (VVLF…SARI) and 38–58 (MGML…ISLL). A Zn(2+)-binding site is contributed by histidine 144. Glutamate 145 is a catalytic residue. Position 148 (histidine 148) interacts with Zn(2+). 2 consecutive transmembrane segments (helical) span residues 152–172 (GDMV…IFLS) and 199–219 (ISSI…VMCF). Residue glutamate 224 participates in Zn(2+) binding.

It belongs to the peptidase M48B family. The cofactor is Zn(2+).

It localises to the cell inner membrane. This Chlorobium limicola (strain DSM 245 / NBRC 103803 / 6330) protein is Protease HtpX homolog.